The primary structure comprises 356 residues: Stomatin-like protein 2, mitochondrial (356 aa).

The N-terminal 28 residues, 1–28 (MLARAARGTGALLLKGSVQASARAPRRA), are a transit peptide targeting the mitochondrion. The residue at position 17 (serine 17) is a Phosphoserine; by PKC/PRKCZ. Residue tyrosine 124 is modified to Phosphotyrosine. An N6-acetyllysine; alternate modification is found at lysine 145. N6-succinyllysine; alternate is present on lysine 145. The stretch at 215-252 (INVAEGKKQAQILASEAEKAEQINQAAGEASAVLAKAK) forms a coiled coil. Residue lysine 233 is modified to N6-acetyllysine. The segment at 326 to 356 (EAQDSVSSRSSRDVRSTDASLDEELDRVKLS) is disordered. Serine 330 bears the Phosphoserine mark.

It belongs to the band 7/mec-2 family. As to quaternary structure, forms homooligomers. Interacts with MFN2; may form heterooligomers with this mediator of mitochondrial fusion. Interacts with PHB1 and PHB2; stabilizes and recruits them to cardiolipin-enriched mitochondrial membranes. Interacts with CACNA2D2.

It localises to the cell membrane. The protein localises to the mitochondrion. The protein resides in the mitochondrion inner membrane. Its subcellular location is the mitochondrion intermembrane space. It is found in the membrane raft. It localises to the cytoplasm. The protein localises to the cytoskeleton. Its function is as follows. Mitochondrial protein that probably regulates the biogenesis and the activity of mitochondria. Stimulates cardiolipin biosynthesis, binds cardiolipin-enriched membranes where it recruits and stabilizes some proteins including prohibitin and may therefore act in the organization of functional microdomains in mitochondrial membranes. Through regulation of the mitochondrial function may play a role into several biological processes including cell migration, cell proliferation, T-cell activation, calcium homeostasis and cellular response to stress. May play a role in calcium homeostasis through negative regulation of calcium efflux from mitochondria. Required for mitochondrial hyperfusion a pro-survival cellular response to stress which results in increased ATP production by mitochondria. May also regulate the organization of functional domains at the plasma membrane and play a role in T-cell activation through association with the T-cell receptor signaling complex and its regulation. This chain is Stomatin-like protein 2, mitochondrial (STOML2), found in Bos taurus (Bovine).